The primary structure comprises 88 residues: MAQVVWTWRALADLTAIRDYIGQFSPLAAQRMALRLKTAADSLAEYPERGRLATATLRELVVVPPYVIRYYVADGLVHIVRIRHAARL.

The protein belongs to the RelE toxin family.

Toxic component of a type II toxin-antitoxin (TA) system. Its toxic effect is neutralized by coexpression with cognate antitoxin RelB2 but no other ParD or RelB antitoxin. The polypeptide is Toxin RelE2 (relE2) (Caulobacter vibrioides (strain ATCC 19089 / CIP 103742 / CB 15) (Caulobacter crescentus)).